The chain runs to 626 residues: Putative ankyrin repeat protein L768 (626 aa).

ANK repeat units lie at residues 217-246 (NLYDVFKYACSRGKLHIIDYLLDKRIEYDF), 333-362 (DLDMIIVMAIEFNSMELINWCMNNGININK), 421-451 (TAENIIHNIIENRPHIEILKYLLTEVQTEHI), 515-545 (SNLKILFVTIMTDNIDILEFLLEINKYNQDY), and 547-571 (QWALIFSSNNITILEYIINNTNVNP).

This chain is Putative ankyrin repeat protein L768, found in Acanthamoeba polyphaga mimivirus (APMV).